The chain runs to 23 residues: Dahlein-4.1 (23 aa).

In terms of tissue distribution, expressed by the skin dorsal glands.

Its subcellular location is the secreted. Its function is as follows. Has no antimicrobial activity. This Ranoidea dahlii (Dahl's aquatic frog) protein is Dahlein-4.1.